Here is a 106-residue protein sequence, read N- to C-terminus: MDAQKMKMVIGLVLVATTAFALMIPAASAVDDFITRRAYDNLVKSGAIKDIPVMAKTIISNPVLEEGMLTYYTNKKLGDSAISCGETCFKFKCYTPRCSCSYPVCK.

A signal peptide spans 1-29 (MDAQKMKMVIGLVLVATTAFALMIPAASA). A propeptide spanning residues 30 to 79 (VDDFITRRAYDNLVKSGAIKDIPVMAKTIISNPVLEEGMLTYYTNKKLGD) is cleaved from the precursor. 3 disulfides stabilise this stretch: cysteine 84-cysteine 98, cysteine 88-cysteine 100, and cysteine 93-cysteine 105.

It belongs to the cyclotide family. Moebius subfamily. Violacin-A is not a cyclic peptide.

Functionally, probably participates in a plant defense mechanism. Has low hemolytic activity. The polypeptide is Violacin-A (Viola odorata (Sweet violet)).